The sequence spans 94 residues: MIKSELFERIAEQKINISNKMIERAAKEMLEHMIISLANGKRIEIRGFGSFSLHYRSSRIGRNPKTGKSVKLNEKYVPYFKPGKKLRDRANIHK.

The protein belongs to the bacterial histone-like protein family. In terms of assembly, heterodimer of an alpha and a beta chain.

Its function is as follows. This protein is one of the two subunits of integration host factor, a specific DNA-binding protein that functions in genetic recombination as well as in transcriptional and translational control. This chain is Integration host factor subunit beta, found in Buchnera aphidicola subsp. Acyrthosiphon pisum (strain 5A).